Reading from the N-terminus, the 91-residue chain is DNA-binding protein HU (91 aa).

The protein belongs to the bacterial histone-like protein family.

Functionally, histone-like DNA-binding protein which is capable of wrapping DNA to stabilize it, and thus to prevent its denaturation under extreme environmental conditions. Also seems to act as a fortuitous virulence factor in delayed sequelae by binding to heparan sulfate-proteoglycans in the extracellular matrix of target organs and acting as a nidus for in situ immune complex formation. The protein is DNA-binding protein HU (hup) of Streptococcus downei (Streptococcus sobrinus).